The sequence spans 184 residues: Large ribosomal subunit protein uL5 (184 aa).

This sequence belongs to the universal ribosomal protein uL5 family. As to quaternary structure, part of the 50S ribosomal subunit; part of the 5S rRNA/L5/L18/L25 subcomplex. Contacts the 5S rRNA and the P site tRNA. Forms a bridge to the 30S subunit in the 70S ribosome.

This is one of the proteins that bind and probably mediate the attachment of the 5S RNA into the large ribosomal subunit, where it forms part of the central protuberance. In the 70S ribosome it contacts protein S13 of the 30S subunit (bridge B1b), connecting the 2 subunits; this bridge is implicated in subunit movement. Contacts the P site tRNA; the 5S rRNA and some of its associated proteins might help stabilize positioning of ribosome-bound tRNAs. This is Large ribosomal subunit protein uL5 from Fervidobacterium nodosum (strain ATCC 35602 / DSM 5306 / Rt17-B1).